The sequence spans 434 residues: Adenylosuccinate synthetase (434 aa).

Residues 25–31 (GDEGKGK) and 53–55 (GHT) each bind GTP. The active-site Proton acceptor is the aspartate 26. Aspartate 26 and glycine 53 together coordinate Mg(2+). Residues 26–29 (DEGK), 51–54 (NAGH), threonine 142, arginine 156, asparagine 233, threonine 248, and arginine 312 each bind IMP. The active-site Proton donor is the histidine 54. Position 308 to 314 (308 to 314 (VTTGRKR)) interacts with substrate. Residues arginine 314, 340-342 (KLD), and 422-424 (GVG) each bind GTP.

Belongs to the adenylosuccinate synthetase family. In terms of assembly, homodimer. The cofactor is Mg(2+).

The protein localises to the cytoplasm. It catalyses the reaction IMP + L-aspartate + GTP = N(6)-(1,2-dicarboxyethyl)-AMP + GDP + phosphate + 2 H(+). The protein operates within purine metabolism; AMP biosynthesis via de novo pathway; AMP from IMP: step 1/2. Plays an important role in the de novo pathway and in the salvage pathway of purine nucleotide biosynthesis. Catalyzes the first committed step in the biosynthesis of AMP from IMP. The sequence is that of Adenylosuccinate synthetase from Schizosaccharomyces japonicus (strain yFS275 / FY16936) (Fission yeast).